The primary structure comprises 370 residues: Chloromuconate cycloisomerase (370 aa).

The active-site Proton acceptor is the Lys165. Residues Asp194, Glu220, and Asp245 each coordinate Mn(2+). Glu323 functions as the Proton donor in the catalytic mechanism.

This sequence belongs to the mandelate racemase/muconate lactonizing enzyme family. Mn(2+) is required as a cofactor.

The enzyme catalyses 2-[(2R)-2-chloro-2,5-dihydro-5-oxofuryl]acetate = 3-chloro-cis,cis-muconate + H(+). Its pathway is aromatic compound metabolism; 3-chlorocatechol degradation. The protein is Chloromuconate cycloisomerase (tfdDI) of Cupriavidus pinatubonensis (strain JMP 134 / LMG 1197) (Cupriavidus necator (strain JMP 134)).